Consider the following 422-residue polypeptide: Adenylosuccinate synthetase (422 aa).

GTP is bound by residues 12–18 and 40–42; these read GDEGKGK and GHT. The active-site Proton acceptor is the Asp13. Residues Asp13 and Gly40 each contribute to the Mg(2+) site. Residues 13-16, 38-41, Thr129, Arg143, Asn221, Thr236, and Arg300 contribute to the IMP site; these read DEGK and NAGH. The Proton donor role is filled by His41. Residue 296–302 participates in substrate binding; sequence VTTGRKR. Residues Arg302, 328 to 330, and 410 to 412 contribute to the GTP site; these read KLD and GVG.

The protein belongs to the adenylosuccinate synthetase family. Homodimer. Mg(2+) is required as a cofactor.

The protein localises to the cytoplasm. It carries out the reaction IMP + L-aspartate + GTP = N(6)-(1,2-dicarboxyethyl)-AMP + GDP + phosphate + 2 H(+). The protein operates within purine metabolism; AMP biosynthesis via de novo pathway; AMP from IMP: step 1/2. In terms of biological role, plays an important role in the de novo pathway and in the salvage pathway of purine nucleotide biosynthesis. Catalyzes the first committed step in the biosynthesis of AMP from IMP. The chain is Adenylosuccinate synthetase from Pyrenophora tritici-repentis (strain Pt-1C-BFP) (Wheat tan spot fungus).